Consider the following 288-residue polypeptide: Serine/threonine-protein acetyltransferase YopJ (288 aa).

Active-site residues include H109 and E128. H109 is a CoA binding site. Residue 167–168 (RS) coordinates CoA. C172 is a catalytic residue. 1D-myo-inositol hexakisphosphate contacts are provided by residues 182-185 (KLYI) and 224-225 (KH). Residue 227–230 (QGKK) coordinates CoA. A 1D-myo-inositol hexakisphosphate-binding site is contributed by R257. 266 to 270 (DGKEL) is a CoA binding site.

The protein belongs to the acetyltransferase YopJ family. 1D-myo-inositol hexakisphosphate serves as cofactor.

The protein localises to the secreted. It carries out the reaction L-threonyl-[protein] + acetyl-CoA = O-acetyl-L-threonyl-[protein] + CoA. The enzyme catalyses L-seryl-[protein] + acetyl-CoA = O-acetyl-L-seryl-[protein] + CoA. With respect to regulation, 1D-myo-inositol hexakisphosphate activates protein-acetyltransferase activity via an allosteric mechanism: 1D-myo-inositol hexakisphosphate-binding induces a conformational rearrangement that stimulates the interaction with acetyl-CoA. Serine/threonine-protein acetyltransferase translocated into infected cells, which inhibits the host immune response and induces cell death by mediating acetylation of target proteins. Inhibits the MAPK and NF-kappa-B signaling pathways by acetylating protein-kinases such as MAP2K1, MAP2K6, MAP3K7/TAK1 and I-kappa-B kinase (CHUK/IKKA and IKBKB) on serine and threonine residues critical for their activation by phosphorylation, thereby preventing protein-kinase activation. Promotes pyroptosis, a programmed cell death, in host cells by mediating acetylation of MAP3K7/TAK1: MAP3K7/TAK1 inactivation triggers activation of caspase-8 (CASP8), followed by CASP8-dependent cleavage of gasdermin-D (GSDMD) and induction of pyroptosis. Also able to induce intestinal barrier dysfunction by acetylating and inhibiting host protein-kinases RIPK2/RICK and MAP3K7/TAK1, thereby promoting cell death. The polypeptide is Serine/threonine-protein acetyltransferase YopJ (Yersinia pseudotuberculosis serotype I (strain IP32953)).